The primary structure comprises 615 residues: Probable inactive purple acid phosphatase 24 (615 aa).

Positions methionine 1–glycine 26 are cleaved as a signal peptide. N-linked (GlcNAc...) asparagine glycans are attached at residues asparagine 129, asparagine 267, and asparagine 275. A Fe cation-binding site is contributed by aspartate 297. Asparagine 318 carries N-linked (GlcNAc...) asparagine glycosylation. Fe cation is bound by residues aspartate 338 and tyrosine 341. Residue aspartate 338 participates in Zn(2+) binding. The Zn(2+) site is built by asparagine 371, histidine 460, and histidine 502. Residue asparagine 371 participates in substrate binding. Histidine 502–histidine 504 contributes to the substrate binding site. Histidine 504 contacts Fe cation. Residue asparagine 592 is glycosylated (N-linked (GlcNAc...) asparagine).

This sequence belongs to the metallophosphoesterase superfamily. Purple acid phosphatase family. In terms of assembly, homodimer. The cofactor is Fe cation. Zn(2+) serves as cofactor. In terms of tissue distribution, specifically expressed in flowers.

The protein resides in the secreted. The polypeptide is Probable inactive purple acid phosphatase 24 (PAP24) (Arabidopsis thaliana (Mouse-ear cress)).